Here is a 376-residue protein sequence, read N- to C-terminus: Succinyl-diaminopimelate desuccinylase (376 aa).

A Zn(2+)-binding site is contributed by H66. D68 is an active-site residue. D99 lines the Zn(2+) pocket. The Proton acceptor role is filled by E133. 3 residues coordinate Zn(2+): E134, E162, and H348.

The protein belongs to the peptidase M20A family. DapE subfamily. In terms of assembly, homodimer. It depends on Zn(2+) as a cofactor. Co(2+) is required as a cofactor.

It catalyses the reaction N-succinyl-(2S,6S)-2,6-diaminopimelate + H2O = (2S,6S)-2,6-diaminopimelate + succinate. It functions in the pathway amino-acid biosynthesis; L-lysine biosynthesis via DAP pathway; LL-2,6-diaminopimelate from (S)-tetrahydrodipicolinate (succinylase route): step 3/3. Functionally, catalyzes the hydrolysis of N-succinyl-L,L-diaminopimelic acid (SDAP), forming succinate and LL-2,6-diaminopimelate (DAP), an intermediate involved in the bacterial biosynthesis of lysine and meso-diaminopimelic acid, an essential component of bacterial cell walls. In Xanthomonas oryzae pv. oryzae (strain MAFF 311018), this protein is Succinyl-diaminopimelate desuccinylase.